We begin with the raw amino-acid sequence, 217 residues long: Homologous-pairing protein 2 homolog (217 aa).

The interaction with NR3C1, homodimerization and transcriptional activation almost abolished when missing stretch occupies residues 89–117 (LDASIMALTAKVQGLQQSCRHMEAELKEL). Positions 93–153 (IMALTAKVQG…LKNIKAATNH (61 aa)) form a coiled coil. The tract at residues 118 to 182 (TSALTTPEMQ…WRKRKRMTTE (65 aa)) is DNA-binding. The tract at residues 118–182 (TSALTTPEMQ…WRKRKRMTTE (65 aa)) is interaction with NR3C1 decreased when missing.

The protein belongs to the HOP2 family. As to quaternary structure, forms a stable heterodimer with MND1. Interacts with PSMC3/TBP1. Interacts with the DNA-binding domain of the nuclear receptors NR3C1/GR, ESR2/ER-beta, THRB and RXRA. Post-translationally, phosphorylated by PKA, PKC and MAPK.

It localises to the nucleus. Its function is as follows. Plays an important role in meiotic recombination. Stimulates DMC1-mediated strand exchange required for pairing homologous chromosomes during meiosis. The complex PSMC3IP/MND1 binds DNA, stimulates the recombinase activity of DMC1 as well as DMC1 D-loop formation from double-strand DNA. This complex stabilizes presynaptic RAD51 and DMC1 filaments formed on single strand DNA to capture double-strand DNA. This complex stimulates both synaptic and presynaptic critical steps in RAD51 and DMC1-promoted homologous pairing. May inhibit HIV-1 viral protein TAT activity and modulate the activity of proteasomes through association with PSMC3. Plays a role as a coactivator in nuclear receptor-mediated transcription. The protein is Homologous-pairing protein 2 homolog (Psmc3ip) of Rattus norvegicus (Rat).